The following is a 695-amino-acid chain: Scarecrow-like protein 31 (695 aa).

2 disordered regions span residues 105 to 136 and 234 to 260; these read VISDSQTQSSIPNNSITTSSSSNSGDYSNSSN and ISKTRKNHHEREEEEDDLEEARRRSKQ. Residues 113 to 136 are compositionally biased toward low complexity; it reads SSIPNNSITTSSSSNSGDYSNSSN. Residues 233-266 adopt a coiled-coil conformation; the sequence is AISKTRKNHHEREEEEDDLEEARRRSKQFAVNEE. The 388-residue stretch at 306-693 folds into the GRAS domain; that stretch reads AKKKSRAVDF…RILFSSSCWV (388 aa). Positions 313–377 are leucine repeat I (LRI); it reads VDFRTLLTLC…EGSTGTMIQS (65 aa). The segment at 396 to 461 is VHIID; that stretch reads YSVFLSASPF…PGLRKLRITG (66 aa). Residues 427-431 carry the VHIID motif; it reads LHIVD. Positions 477–509 are leucine repeat II (LRII); it reads DTGRRLTEYCKRFGVPFEYNAIASKNWETIKME. Positions 519-614 are PFYRE; it reads LAVNAVLRFK…GEFYGREVMN (96 aa). The tract at residues 617–693 is SAW; sequence ACEGVDRVER…RILFSSSCWV (77 aa).

Belongs to the GRAS family. In terms of tissue distribution, expressed in seedlings, roots, cotyledons, leaves and sepals.

The protein localises to the nucleus. Functionally, probable transcription factor involved in plant development. This chain is Scarecrow-like protein 31 (SCL31), found in Arabidopsis thaliana (Mouse-ear cress).